A 66-amino-acid chain; its full sequence is Toxin Os1 (66 aa).

The region spanning 2–66 is the LCN-type CS-alpha/beta domain; it reads RDGYIVQLHN…PIKWLDPKCY (65 aa). Disulfide bonds link C12-C65, C16-C37, C22-C47, and C26-C49.

The protein belongs to the long (4 C-C) scorpion toxin superfamily. Sodium channel inhibitor family. Alpha subfamily. In terms of tissue distribution, expressed by the venom gland.

It is found in the secreted. In terms of biological role, alpha toxins bind voltage-independently at site-3 of sodium channels (Nav) and inhibit the inactivation of the activated channels, thereby blocking neuronal transmission. This toxin possesses a high paralytic activity against mice. This Orthochirus scrobiculosus (Central Asian scorpion) protein is Toxin Os1.